The chain runs to 220 residues: Ribosomal RNA small subunit methyltransferase G 1 (220 aa).

The S-adenosyl-L-methionine site is built by glycine 79, phenylalanine 84, and arginine 150.

This sequence belongs to the methyltransferase superfamily. RNA methyltransferase RsmG family.

Its subcellular location is the cytoplasm. It catalyses the reaction guanosine(527) in 16S rRNA + S-adenosyl-L-methionine = N(7)-methylguanosine(527) in 16S rRNA + S-adenosyl-L-homocysteine. In terms of biological role, specifically methylates the N7 position of guanine in position 527 of 16S rRNA. The polypeptide is Ribosomal RNA small subunit methyltransferase G 1 (Syntrophobacter fumaroxidans (strain DSM 10017 / MPOB)).